Reading from the N-terminus, the 292-residue chain is AKT-interacting protein (292 aa).

Residues 1 to 11 (MNPLWSMSSGS) show a composition bias toward polar residues. The tract at residues 1–64 (MNPLWSMSSG…SPAPAAQSTN (64 aa)) is disordered. Basic and acidic residues predominate over residues 14 to 23 (KRAEGEEKTL). A Phosphoserine modification is found at serine 30. One can recognise a UBC core domain in the interval 74-222 (YLEYSLLAEF…VVDSVKVCTA (149 aa)).

Belongs to the ubiquitin-conjugating enzyme family. FTS subfamily. As to quaternary structure, component of the FTS/Hook/FHIP complex (FHF complex), composed of AKTIP/FTS, FHIP1B, and one or more members of the Hook family of proteins HOOK1, HOOK2, and HOOK3. Interacts directly with HOOK1, HOOK2 and HOOK3. The FHF complex associates with the homotypic vesicular sorting complex (the HOPS complex). Also interacts with AKT1. May interact with FHIP1A.

The protein localises to the cytoplasm. It localises to the cell membrane. In terms of biological role, component of the FTS/Hook/FHIP complex (FHF complex). The FHF complex may function to promote vesicle trafficking and/or fusion via the homotypic vesicular protein sorting complex (the HOPS complex). Regulates apoptosis by enhancing phosphorylation and activation of AKT1. Increases release of TNFSF6 via the AKT1/GSK3B/NFATC1 signaling cascade. FHF complex promotes the distribution of AP-4 complex to the perinuclear area of the cell. This Rattus norvegicus (Rat) protein is AKT-interacting protein (Aktip).